A 289-amino-acid chain; its full sequence is Ribosomal protein L11 methyltransferase (289 aa).

Thr-134, Gly-155, Asp-177, and Asn-225 together coordinate S-adenosyl-L-methionine.

Belongs to the methyltransferase superfamily. PrmA family.

It localises to the cytoplasm. It catalyses the reaction L-lysyl-[protein] + 3 S-adenosyl-L-methionine = N(6),N(6),N(6)-trimethyl-L-lysyl-[protein] + 3 S-adenosyl-L-homocysteine + 3 H(+). Its function is as follows. Methylates ribosomal protein L11. This chain is Ribosomal protein L11 methyltransferase, found in Parasynechococcus marenigrum (strain WH8102).